Reading from the N-terminus, the 265-residue chain is Elongation factor 1-delta (265 aa).

Residues 31 to 54 (MGSASNKPHNSPQSAASALSNSGD) are compositionally biased toward polar residues. Disordered regions lie at residues 31 to 64 (MGSASNKPHNSPQSAASALSNSGDGSELAARVAN) and 118 to 155 (KVQVTPAAKEENGTGEDDDDDDDIDLFGSDNEEEDAEA). The segment covering 130 to 153 (GTGEDDDDDDDIDLFGSDNEEEDA) has biased composition (acidic residues).

Belongs to the EF-1-beta/EF-1-delta family. EF-1 is composed of 4 subunits: alpha, beta, delta, and gamma.

EF-1-beta and EF-1-delta stimulate the exchange of GDP bound to EF-1-alpha to GTP. The protein is Elongation factor 1-delta (eef1d) of Xenopus laevis (African clawed frog).